Reading from the N-terminus, the 197-residue chain is Holliday junction branch migration complex subunit RuvA (197 aa).

Residues 1–64 form a domain I region; it reads MYEYIKGKYI…EDFIGVYGFL (64 aa). The interval 65–144 is domain II; that stretch reads TKDELSMFKL…DILEEDDEQI (80 aa). The interval 145 to 149 is flexible linker; it reads INKVA. The segment at 149-197 is domain III; it reads ADDKKVLEAVAALVTLGYSEKEANKVINSCDKNNSLEQIIKEALKYLMK.

This sequence belongs to the RuvA family. As to quaternary structure, homotetramer. Forms an RuvA(8)-RuvB(12)-Holliday junction (HJ) complex. HJ DNA is sandwiched between 2 RuvA tetramers; dsDNA enters through RuvA and exits via RuvB. An RuvB hexamer assembles on each DNA strand where it exits the tetramer. Each RuvB hexamer is contacted by two RuvA subunits (via domain III) on 2 adjacent RuvB subunits; this complex drives branch migration. In the full resolvosome a probable DNA-RuvA(4)-RuvB(12)-RuvC(2) complex forms which resolves the HJ.

The protein resides in the cytoplasm. In terms of biological role, the RuvA-RuvB-RuvC complex processes Holliday junction (HJ) DNA during genetic recombination and DNA repair, while the RuvA-RuvB complex plays an important role in the rescue of blocked DNA replication forks via replication fork reversal (RFR). RuvA specifically binds to HJ cruciform DNA, conferring on it an open structure. The RuvB hexamer acts as an ATP-dependent pump, pulling dsDNA into and through the RuvAB complex. HJ branch migration allows RuvC to scan DNA until it finds its consensus sequence, where it cleaves and resolves the cruciform DNA. In Clostridium botulinum (strain ATCC 19397 / Type A), this protein is Holliday junction branch migration complex subunit RuvA.